Here is a 377-residue protein sequence, read N- to C-terminus: Floricaula/leafy homolog (377 aa).

The span at 116–126 (RRRLDEEDPRR) shows a compositional bias: basic and acidic residues. The tract at residues 116-190 (RRRLDEEDPR…RKKGQRKVVD (75 aa)) is disordered. Residues 131-141 (SGDNNTNTLDA) show a composition bias toward polar residues. DNA-binding regions lie at residues 206-210 (REHPF), 275-282 (NKPKMRHY), and 346-349 (YVPT).

It belongs to the FLO/LFY family. In developing inflorescences, leaf primordia and very young leaves.

It is found in the nucleus. Functionally, probable transcription factor. The protein is Floricaula/leafy homolog (FL) of Populus trichocarpa (Western balsam poplar).